A 146-amino-acid chain; its full sequence is Hemoglobin subunit beta (146 aa).

Val-1 is modified (N-acetylvaline). Residues His-2–His-146 form the Globin domain. His-63 is a binding site for heme b. An N6-acetyllysine modification is found at Lys-82. A heme b-binding site is contributed by His-92. At Cys-93 the chain carries S-nitrosocysteine. Lys-144 carries the post-translational modification N6-acetyllysine.

Belongs to the globin family. As to quaternary structure, heterotetramer of two alpha chains and two beta chains. As to expression, red blood cells.

Its function is as follows. Involved in oxygen transport from the lung to the various peripheral tissues. The chain is Hemoglobin subunit beta (HBB) from Cavia porcellus (Guinea pig).